Here is a 765-residue protein sequence, read N- to C-terminus: MSNTSNFNERVTENAKPPKNVKSIIWKTIGIIIVMAIIIGLILFYVLPRNTIANISNIQYVDGNLVATATINGRSGRFILDLENSTYQTSYTSGLSLSISVFLRNLNNANGQSFFVSLIRPATSSANDAVFNIANLSINQTRGVATLVTEGGSYSAVLTTTLTALPLTGQKFLPEGFNLDTANTDAYRAAGAIPGIQRLLAVGNVQLPNQSTAILTQFLTSIIPFVILIVIYIVIARRFSRTMGAGGAIGEDGENVFTIGKSQAKLAKSTFKFTDVAGIEEEKSELIELVDYLKRPGKYVQMGARTPRGVVLYGPPGTGKTLLAKAVAGEAGVPFFQVTGSAFEDMLVGVGAKRVRNLFAKAKKAAPCIIFIDEIDSVGSKRGKYEISAGSATDQTLNQLLAEMDGFSTRTGIIVMAATNRLDVLDDALLRPGRFDRHIQVNLPDIKEREAILKIHSRNKNISSKVNLLDIARRTPGFSGAQLENVLNEATLLAVRADRTSISLTDIDEAIDRVIAGPAKKSRVISDFEKNQVAHHEAGHALVGLHLKGADEVQKITIIPRGQAGGYTLSTPKDAELNLKKKSDLLNMIAGALGGRASEELFFGKDAISTGASNDFYKATNIAKTMVTQLGMSDLGITQFLPSEGGINPNARYYSENTAQRIDEAIAKILEEQYQVAYNIIKDNQNELKLIVEALLIQETIVKNDIDYIHEHLKLPEAIIKLKEEQLKEKAAAEKEEQAEKAKLDHQSDSAQPQEEPTASTASSN.

Over 1 to 27 (MSNTSNFNERVTENAKPPKNVKSIIWK) the chain is Cytoplasmic. The helical transmembrane segment at 28–48 (TIGIIIVMAIIIGLILFYVLP) threads the bilayer. Residues 49–213 (RNTIANISNI…NVQLPNQSTA (165 aa)) are Extracellular-facing. A helical transmembrane segment spans residues 214-234 (ILTQFLTSIIPFVILIVIYIV). Topologically, residues 235–765 (IARRFSRTMG…EPTASTASSN (531 aa)) are cytoplasmic. 314–321 (GPPGTGKT) is a binding site for ATP. His536 contacts Zn(2+). Glu537 is an active-site residue. 2 residues coordinate Zn(2+): His540 and Asp615. A compositionally biased stretch (basic and acidic residues) spans 730–748 (KAAAEKEEQAEKAKLDHQS). Residues 730 to 765 (KAAAEKEEQAEKAKLDHQSDSAQPQEEPTASTASSN) form a disordered region. Residues 749–765 (DSAQPQEEPTASTASSN) are compositionally biased toward polar residues.

This sequence in the central section; belongs to the AAA ATPase family. It in the C-terminal section; belongs to the peptidase M41 family. Homohexamer. Zn(2+) is required as a cofactor.

It is found in the cell membrane. Functionally, acts as a processive, ATP-dependent zinc metallopeptidase for both cytoplasmic and membrane proteins. Plays a role in the quality control of integral membrane proteins. In Mycoplasmoides gallisepticum (strain R(high / passage 156)) (Mycoplasma gallisepticum), this protein is ATP-dependent zinc metalloprotease FtsH.